Here is a 3828-residue protein sequence, read N- to C-terminus: Histone-lysine N-methyltransferase trithorax (3828 aa).

Disordered regions lie at residues 25–179 (EDEA…AAAA), 356–390 (AVKSSGSSPNPNHNPNAVAGSTSAAAPGAPTATKQ), and 512–589 (FRKQ…RSTR). Residues 29–57 (ASAAAAAAAATAATTEQHQQSEQSAGSSA) are compositionally biased toward low complexity. Positions 77 to 89 (AATSGNRGASSGA) are enriched in polar residues. A compositionally biased stretch (low complexity) spans 101 to 114 (GNGSSTGSKTTNGG). The segment covering 152 to 165 (DGTEDTNNDDDDDS) has biased composition (acidic residues). The span at 359–387 (SSGSSPNPNHNPNAVAGSTSAAAPGAPTA) shows a compositional bias: low complexity. The segment covering 513–523 (RKQEPQHKTPE) has biased composition (basic and acidic residues). Acidic residues predominate over residues 524 to 553 (DNDDDGSASSDAIEDDEDIDDDDAEENEEA). Residues 554–581 (ASEKSAETTASVDEKEADDRQLVMDKHF) show a composition bias toward basic and acidic residues. Positions 725–839 (ASTCAVCSAP…AGHRSRLSAI (115 aa)) form a DNA-binding region, nuclear receptor. 3 disordered regions span residues 933 to 1036 (ESKE…SAVP), 1075 to 1094 (ELAAAEAGPAPTTTTTTTSP), and 1131 to 1170 (AQPAVKSVLESRSSKSNTQTEAKKTPATSGSSKGKVTTRN). Over residues 960–974 (AKQDKEKARELEAEK) the composition is skewed to basic and acidic residues. Low complexity-rich tracts occupy residues 998–1022 (ASTTTTVSAASSSTSHTSSAATNSS) and 1078–1094 (AAEAGPAPTTTTTTTSP). Over residues 1140–1170 (ESRSSKSNTQTEAKKTPATSGSSKGKVTTRN) the composition is skewed to polar residues. 3 PHD-type zinc fingers span residues 1251-1334 (RALC…CTVC), 1335-1380 (YTCN…CLKC), and 1408-1469 (GNFC…CARR). In terms of domain architecture, Bromo spans 1483 to 1644 (AVMEEFKSSL…SEQFPWFQNE (162 aa)). A C2HC pre-PHD-type zinc finger spans residues 1708–1748 (TRVCLFCRKSGEGLSGEEARLLYCGHDCWVHINCAMWSAEV). The PHD-type 4 zinc-finger motif lies at 1769 to 1816 (IKCTVCGNRGATVGCNVKSCGEHYHYPCARTIDCAFLTDKSMYCPAHA). Residues 1856–1913 (KVQFHIGSVAVRQLGSIVPRFSDSFEAIVPINFLCSRLYWSSKEPWKIVEYTVRTTIQ) form the FYR N-terminal domain. Disordered regions lie at residues 2252–2272 (CEPMSTSESESETATGTAQLS), 2464–2510 (AHQK…QQQQ), 2826–2848 (RNTNANKSPISVLSKVQPQPQQS), 2897–2973 (RQQQ…SPAA), 2988–3031 (APAP…QLSM), 3117–3178 (ASAN…VPAG), 3314–3338 (NGSGGGAAEGIGQVDDAEEDEDDDD), and 3457–3487 (KLDVPQQQPDTVPPNVVPTAAAPQQPPPMRD). Low complexity-rich tracts occupy residues 2253 to 2268 (EPMSTSESESETATGT), 2483 to 2510 (QGQQQQQRHQQHQQHQQHQQQQQQQQQQ), and 2836 to 2848 (SVLSKVQPQPQQS). The segment covering 2897–2917 (RQQQANELKNKQAAGQQTGST) has biased composition (polar residues). Low complexity-rich tracts occupy residues 2956–2973 (ATSAASMQHHQQQQSPAA), 2988–2997 (APAPQPQQQE), 3005–3031 (LHQQQQQQQQQQQHMQQHQQQQQQLSM), and 3117–3132 (ASANNSSNSNVTQQNS). The span at 3148-3164 (QQRQEPTPLSNDVVVQS) shows a compositional bias: polar residues. Over residues 3328–3338 (DDAEEDEDDDD) the composition is skewed to acidic residues. The region spanning 3493-3577 (GPHLLYEIQS…EKCVKYTPKY (85 aa)) is the FYR C-terminal domain. In terms of domain architecture, SET spans 3690 to 3806 (DYVGVFRSHI…QGEELTYDYK (117 aa)). Residues His-3700, Arg-3702, Tyr-3744, and 3767-3768 (NH) contribute to the S-adenosyl-L-methionine site. Positions 3770, 3816, 3818, and 3823 each coordinate Zn(2+). One can recognise a Post-SET domain in the interval 3812 to 3828 (EKIPCSCGSKRCRKYLN).

Belongs to the class V-like SAM-binding methyltransferase superfamily. Histone-lysine methyltransferase family. TRX/MLL subfamily. In terms of assembly, interacts with ash1 via its SET domain.

Its subcellular location is the nucleus. It carries out the reaction L-lysyl(9)-[histone H3] + 3 S-adenosyl-L-methionine = N(6),N(6),N(6)-trimethyl-L-lysyl(9)-[histone H3] + 3 S-adenosyl-L-homocysteine + 3 H(+). Functionally, histone methyltransferase that methylates 'Lys-4' of histone H3 (H3K4me). H3K4me represents a specific tag for epigenetic transcriptional activation. Functions in segment determination through interaction with genes of bithorax (BX-C) and antennapedia (ANT-C) complexes. Acts as an activator of BX-C. Involved in the very early regulation of homeotic genes expressed only in the posterior region of the embryo. This Drosophila virilis (Fruit fly) protein is Histone-lysine N-methyltransferase trithorax (trx).